The primary structure comprises 236 residues: Phosphoribosylaminoimidazole-succinocarboxamide synthase (236 aa).

It belongs to the SAICAR synthetase family.

The catalysed reaction is 5-amino-1-(5-phospho-D-ribosyl)imidazole-4-carboxylate + L-aspartate + ATP = (2S)-2-[5-amino-1-(5-phospho-beta-D-ribosyl)imidazole-4-carboxamido]succinate + ADP + phosphate + 2 H(+). It functions in the pathway purine metabolism; IMP biosynthesis via de novo pathway; 5-amino-1-(5-phospho-D-ribosyl)imidazole-4-carboxamide from 5-amino-1-(5-phospho-D-ribosyl)imidazole-4-carboxylate: step 1/2. This is Phosphoribosylaminoimidazole-succinocarboxamide synthase from Rickettsia bellii (strain OSU 85-389).